The primary structure comprises 1168 residues: Carbamoyl phosphate synthase arginine-specific large chain, mitochondrial (1168 aa).

The N-terminal 51 residues, 1 to 51 (MLSTVHKAGRAPALLRHGRRVPVQASQLRALTSGAQNTSIFQTQANAAQRL), are a transit peptide targeting the mitochondrion. The interval 86–483 (RDHVDVKKVL…SFQKAIRQVD (398 aa)) is carboxyphosphate synthetic domain. ATP contacts are provided by residues Arg213, 243–298 (ANKI…WKEV), Arg253, Gly259, Gly260, Lys290, Leu292, Glu297, Gly323, Ile324, His325, Gln366, and Glu380. Residues 217–409 (AKALEEINIP…LAYTAAKIGL (193 aa)) form the ATP-grasp 1 domain. Residues Gln366, Glu380, and Asn382 each coordinate Mg(2+). The Mn(2+) site is built by Gln366, Glu380, and Asn382. Positions 484 to 628 (PRFVGFQGDK…YTTYNASSHD (145 aa)) are oligomerization domain. The tract at residues 629–1017 (VTFEDKGTVI…AYWASLQSAM (389 aa)) is carbamoyl phosphate synthetic domain. In terms of domain architecture, ATP-grasp 2 spans 754-951 (SEILDSIGVD…FIDAATKALV (198 aa)). ATP-binding positions include 780–837 (AEEV…AQEI), Arg790, Lys829, Ile831, Glu836, Gly861, Val862, His863, Ser864, Gln904, and Glu922. 3 residues coordinate Mg(2+): Gln904, Glu922, and Asn924. Residues Gln904, Glu922, and Asn924 each contribute to the Mn(2+) site. The allosteric domain stretch occupies residues 1018 to 1152 (NFRVPEPGEG…AEKLPRPEGI (135 aa)). The region spanning 1019–1168 (FRVPEPGEGL…WSEFIGGKPL (150 aa)) is the MGS-like domain.

This sequence belongs to the CarB family. As to quaternary structure, heterodimer composed of 2 chains; the small (or glutamine) chain promotes the hydrolysis of glutamine to ammonia, which is used by the large (or ammonia) chain to synthesize carbamoyl phosphate. Mg(2+) serves as cofactor. Mn(2+) is required as a cofactor.

The protein localises to the mitochondrion matrix. It carries out the reaction hydrogencarbonate + L-glutamine + 2 ATP + H2O = carbamoyl phosphate + L-glutamate + 2 ADP + phosphate + 2 H(+). The enzyme catalyses hydrogencarbonate + NH4(+) + 2 ATP = carbamoyl phosphate + 2 ADP + phosphate + 2 H(+). It participates in amino-acid biosynthesis; L-arginine biosynthesis; carbamoyl phosphate from bicarbonate: step 1/1. Functionally, large subunit of the arginine-specific carbamoyl phosphate synthase (CPSase). CPSase catalyzes the formation of carbamoyl phosphate from the ammonia moiety of glutamine, hydrogencarbonate, and phosphate donated by ATP, the first step of the arginine biosynthetic pathway. The large subunit (synthetase) binds the substrates ammonia (free or transferred from glutamine from the small subunit), hydrogencarbonate and ATP and carries out an ATP-coupled ligase reaction, activating hydrogencarbonate by forming carboxy phosphate which reacts with ammonia to form carbamoyl phosphate. The sequence is that of Carbamoyl phosphate synthase arginine-specific large chain, mitochondrial (arg-3) from Neurospora crassa (strain ATCC 24698 / 74-OR23-1A / CBS 708.71 / DSM 1257 / FGSC 987).